A 496-amino-acid polypeptide reads, in one-letter code: NADH-quinone oxidoreductase subunit N (496 aa).

13 helical membrane-spanning segments follow: residues 16-36, 46-66, 79-99, 116-136, 166-186, 208-228, 245-267, 278-298, 304-324, 331-351, 382-402, 422-442, and 464-484; these read SLSP…VGAI, CVFC…FNGL, ISII…PLAL, FLFM…LIIF, FAMG…FYLA, LIIL…LSLI, LAGY…IFAM, DMLY…ALVQ, MLAF…VANS, LFFY…MLWV, AVIM…SVFW, IIMI…VFMF, and VIVG…GAIL.

Belongs to the complex I subunit 2 family. NDH-1 is composed of 14 different subunits. Subunits NuoA, H, J, K, L, M, N constitute the membrane sector of the complex.

It localises to the cell inner membrane. It carries out the reaction a quinone + NADH + 5 H(+)(in) = a quinol + NAD(+) + 4 H(+)(out). Functionally, NDH-1 shuttles electrons from NADH, via FMN and iron-sulfur (Fe-S) centers, to quinones in the respiratory chain. The immediate electron acceptor for the enzyme in this species is believed to be ubiquinone. Couples the redox reaction to proton translocation (for every two electrons transferred, four hydrogen ions are translocated across the cytoplasmic membrane), and thus conserves the redox energy in a proton gradient. This Campylobacter concisus (strain 13826) protein is NADH-quinone oxidoreductase subunit N.